An 83-amino-acid polypeptide reads, in one-letter code: Large ribosomal subunit protein eL14 (83 aa).

Belongs to the eukaryotic ribosomal protein eL14 family. As to quaternary structure, part of the 50S ribosomal subunit.

The chain is Large ribosomal subunit protein eL14 from Thermococcus kodakarensis (strain ATCC BAA-918 / JCM 12380 / KOD1) (Pyrococcus kodakaraensis (strain KOD1)).